Consider the following 403-residue polypeptide: Tyrosine--tRNA ligase (403 aa).

Positions 46–55 match the 'HIGH' region motif; sequence PTAPDLHLGH. The 'KMSKS' region signature appears at 230-234; it reads KMSKS. An ATP-binding site is contributed by K233. The 61-residue stretch at 342–402 folds into the S4 RNA-binding domain; sequence LFITQILNQA…GKKAYAKVTV (61 aa).

Belongs to the class-I aminoacyl-tRNA synthetase family. TyrS type 2 subfamily. In terms of assembly, homodimer.

It localises to the cytoplasm. It carries out the reaction tRNA(Tyr) + L-tyrosine + ATP = L-tyrosyl-tRNA(Tyr) + AMP + diphosphate + H(+). Functionally, catalyzes the attachment of tyrosine to tRNA(Tyr) in a two-step reaction: tyrosine is first activated by ATP to form Tyr-AMP and then transferred to the acceptor end of tRNA(Tyr). The chain is Tyrosine--tRNA ligase from Psychrobacter arcticus (strain DSM 17307 / VKM B-2377 / 273-4).